An 829-amino-acid chain; its full sequence is Probable receptor-like protein kinase At5g59700 (829 aa).

The signal sequence occupies residues 1–24; that stretch reads MGGEKFGFLIWILSIPCLIFLCYG. Over 25-406 the chain is Extracellular; that stretch reads YVPVDNYLIN…SSTTKKNVGM (382 aa). Asn-40, Asn-216, Asn-279, and Asn-380 each carry an N-linked (GlcNAc...) asparagine glycan. Residues 407–427 traverse the membrane as a helical segment; that stretch reads IIGLTIGSLLALVVLGGFFVL. Residues 428–829 are Cytoplasmic-facing; sequence YKKRGRDQDG…FSQLIKSEGR (402 aa). The region spanning 482–755 is the Protein kinase domain; that stretch reads FDENRAIGVG…GDVLWNLEYA (274 aa). ATP is bound by residues 488-496 and Lys-510; that span reads IGVGGFGKV. Asp-606 functions as the Proton acceptor in the catalytic mechanism.

This sequence belongs to the protein kinase superfamily. Ser/Thr protein kinase family.

The protein localises to the cell membrane. The chain is Probable receptor-like protein kinase At5g59700 from Arabidopsis thaliana (Mouse-ear cress).